A 457-amino-acid chain; its full sequence is uncharacterized protein (457 aa).

N6-(pyridoxal phosphate)lysine is present on K75.

It depends on pyridoxal 5'-phosphate as a cofactor.

This is an uncharacterized protein from Sinorhizobium fredii (strain NBRC 101917 / NGR234).